Consider the following 358-residue polypeptide: WD repeat-containing protein 53 (358 aa).

WD repeat units lie at residues 8–46 (GHSS…LGHT), 92–131 (VNEE…ISRS), 134–174 (RHSN…PLWI), 195–234 (LNPA…CEQE), and 239–278 (GHSL…EKKH). Residues 278 to 294 (HKSPTKHTHRKKTKRAA) show a composition bias toward basic residues. The segment at 278 to 309 (HKSPTKHTHRKKTKRAAYTKQGGGTHASVTGE) is disordered.

This sequence belongs to the WD repeat WDR53 family.

This is WD repeat-containing protein 53 (WDR53) from Bos taurus (Bovine).